The sequence spans 78 residues: MQANHSVSYLYESSTSKRSNGLFSQTQKQGSFQKALSQTQEEIEDEDLMVDLNTGSLTPVKLKYWTQMSAMTEKFGKL.

The tract at residues 1–28 (MQANHSVSYLYESSTSKRSNGLFSQTQK) is disordered.

This is an uncharacterized protein from Saccharomyces cerevisiae (strain ATCC 204508 / S288c) (Baker's yeast).